The chain runs to 249 residues: Uroplakin-3b-like protein 1 (249 aa).

The N-terminal stretch at 1–26 (MGPHGKQSVLRMPLLLLLTCVQSGTG) is a signal peptide. The Extracellular portion of the chain corresponds to 27–194 (LESINYAPQL…PGSQGKGTVV (168 aa)). Asn-63, Asn-82, and Asn-133 each carry an N-linked (GlcNAc...) asparagine glycan. Residues 195 to 215 (IIAFLSILLAILLVVFLVLVI) form a helical membrane-spanning segment. The Cytoplasmic portion of the chain corresponds to 216–249 (SACLSTSGSSPEEQVRMRHYHTHHMGSLRAERSS).

This sequence belongs to the uroplakin-3 family.

The protein resides in the membrane. This Mus musculus (Mouse) protein is Uroplakin-3b-like protein 1.